The following is a 361-amino-acid chain: Large ribosomal subunit protein uL3 (361 aa).

Positions 339–361 are disordered; the sequence is RPPKKKPPVQRPQITYVSVESKQ. Polar residues predominate over residues 350-361; that stretch reads PQITYVSVESKQ.

Belongs to the universal ribosomal protein uL3 family. Part of the 50S ribosomal subunit. Forms a cluster with proteins L14 and L24e.

Its function is as follows. One of the primary rRNA binding proteins, it binds directly near the 3'-end of the 23S rRNA, where it nucleates assembly of the 50S subunit. The protein is Large ribosomal subunit protein uL3 of Pyrococcus abyssi (strain GE5 / Orsay).